A 238-amino-acid chain; its full sequence is Ribonuclease PH (238 aa).

Residues Arg86 and 124-126 (GTR) each bind phosphate.

It belongs to the RNase PH family. As to quaternary structure, homohexameric ring arranged as a trimer of dimers.

It catalyses the reaction tRNA(n+1) + phosphate = tRNA(n) + a ribonucleoside 5'-diphosphate. Its function is as follows. Phosphorolytic 3'-5' exoribonuclease that plays an important role in tRNA 3'-end maturation. Removes nucleotide residues following the 3'-CCA terminus of tRNAs; can also add nucleotides to the ends of RNA molecules by using nucleoside diphosphates as substrates, but this may not be physiologically important. Probably plays a role in initiation of 16S rRNA degradation (leading to ribosome degradation) during starvation. In Phenylobacterium zucineum (strain HLK1), this protein is Ribonuclease PH.